The chain runs to 402 residues: Flavohemoprotein (402 aa).

Residues 1 to 136 (MLSEKTIEIV…IADAFISIEA (136 aa)) form the Globin domain. Heme b is bound at residue His-85. Residues Tyr-95 and Glu-135 each act as charge relay system in the active site. Positions 147–402 (GGWKDFRNFV…EFFGPAASLQ (256 aa)) are reductase. The FAD-binding FR-type domain occupies 150 to 260 (KDFRNFVVVK…SAPAGDFVLN (111 aa)). Residues Tyr-188 and 204-207 (RQYS) contribute to the FAD site. 273 to 278 (GVGITP) lines the NADP(+) pocket. 394–397 (FFGP) lines the FAD pocket.

Belongs to the globin family. Two-domain flavohemoproteins subfamily. The protein in the C-terminal section; belongs to the flavoprotein pyridine nucleotide cytochrome reductase family. Heme b is required as a cofactor. FAD serves as cofactor.

The enzyme catalyses 2 nitric oxide + NADPH + 2 O2 = 2 nitrate + NADP(+) + H(+). It carries out the reaction 2 nitric oxide + NADH + 2 O2 = 2 nitrate + NAD(+) + H(+). Its function is as follows. Is involved in NO detoxification in an aerobic process, termed nitric oxide dioxygenase (NOD) reaction that utilizes O(2) and NAD(P)H to convert NO to nitrate, which protects the bacterium from various noxious nitrogen compounds. Therefore, plays a central role in the inducible response to nitrosative stress. The sequence is that of Flavohemoprotein from Bacillus thuringiensis subsp. konkukian (strain 97-27).